Consider the following 141-residue polypeptide: Arsenate reductase (141 aa).

Cys-12 (nucleophile; cysteine thioarsenate intermediate) is an active-site residue.

This sequence belongs to the ArsC family.

The catalysed reaction is [glutaredoxin]-dithiol + arsenate + glutathione + H(+) = glutathionyl-S-S-[glutaredoxin] + arsenite + H2O. Its function is as follows. Involved in resistance to arsenate. Catalyzes the reduction of arsenate [As(V)] to arsenite [As(III)]. This is Arsenate reductase from Escherichia coli.